We begin with the raw amino-acid sequence, 351 residues long: tRNA pseudouridine synthase D (351 aa).

Residue aspartate 81 is the Nucleophile of the active site. Positions 158–304 (GVPNYFGSQR…MRHERRAIEL (147 aa)) constitute a TRUD domain.

This sequence belongs to the pseudouridine synthase TruD family.

It carries out the reaction uridine(13) in tRNA = pseudouridine(13) in tRNA. In terms of biological role, responsible for synthesis of pseudouridine from uracil-13 in transfer RNAs. The protein is tRNA pseudouridine synthase D of Aliivibrio fischeri (strain ATCC 700601 / ES114) (Vibrio fischeri).